A 127-amino-acid polypeptide reads, in one-letter code: Small ribosomal subunit protein uS11 (127 aa).

Belongs to the universal ribosomal protein uS11 family. In terms of assembly, part of the 30S ribosomal subunit. Interacts with proteins S7 and S18. Binds to IF-3.

Located on the platform of the 30S subunit, it bridges several disparate RNA helices of the 16S rRNA. Forms part of the Shine-Dalgarno cleft in the 70S ribosome. This chain is Small ribosomal subunit protein uS11, found in Prosthecochloris aestuarii (strain DSM 271 / SK 413).